The primary structure comprises 281 residues: Apolipoprotein E (281 aa).

A signal peptide spans 1-18 (MKVLWAALLIALLAGCQG). Repeat copies occupy residues 82-103 (ALMD…EQLS), 104-125 (PVAE…ARLG), 126-147 (ADME…AMLG), 148-169 (QSTD…TVSY), and 198-219 (TRME…EQVE). Residues 82-219 (ALMDETMKEL…RLDEVKEQVE (138 aa)) form a 5 X 22 AA approximate tandem repeats region. A Methionine sulfoxide modification is found at methionine 145. Serine 149 is modified (phosphoserine). An LDL and other lipoprotein receptors binding region spans residues 160 to 170 (HLRKLRTVSYT). Residues 164-167 (LRTV) and 193-200 (GERLRTRM) each bind heparin. A homooligomerization region spans residues 230-281 (QQMRLQAEAFQARLKSWFEPLVEDMQRQWAGLVEKVQAAVGASAAPVPSDNH). Residues 242-254 (RLKSWFEPLVEDM) form a specificity for association with VLDL region.

The protein belongs to the apolipoprotein A1/A4/E family. In terms of assembly, homotetramer. May interact with ABCA1; functionally associated with ABCA1 in the biogenesis of HDLs. May interact with APP/A4 amyloid-beta peptide; the interaction is extremely stable in vitro but its physiological significance is unclear. May interact with MAPT. May interact with MAP2. In the cerebrospinal fluid, interacts with secreted SORL1. Interacts with PMEL; this allows the loading of PMEL luminal fragment on ILVs to induce fibril nucleation. APOE exists as multiple glycosylated and sialylated glycoforms within cells and in plasma. The extent of glycosylation and sialylation are tissue and context specific. In terms of processing, glycated in plasma VLDL. Post-translationally, phosphorylated by FAM20C in the extracellular medium.

It localises to the secreted. It is found in the extracellular space. Its subcellular location is the extracellular matrix. The protein resides in the extracellular vesicle. The protein localises to the endosome. It localises to the multivesicular body. Its function is as follows. APOE is an apolipoprotein, a protein associating with lipid particles, that mainly functions in lipoprotein-mediated lipid transport between organs via the plasma and interstitial fluids. APOE is a core component of plasma lipoproteins and is involved in their production, conversion and clearance. Apolipoproteins are amphipathic molecules that interact both with lipids of the lipoprotein particle core and the aqueous environment of the plasma. As such, APOE associates with chylomicrons, chylomicron remnants, very low density lipoproteins (VLDL) and intermediate density lipoproteins (IDL) but shows a preferential binding to high-density lipoproteins (HDL). It also binds a wide range of cellular receptors including the LDL receptor/LDLR, the LDL receptor-related proteins LRP1, LRP2 and LRP8 and the very low-density lipoprotein receptor/VLDLR that mediate the cellular uptake of the APOE-containing lipoprotein particles. Finally, APOE also has a heparin-binding activity and binds heparan-sulfate proteoglycans on the surface of cells, a property that supports the capture and the receptor-mediated uptake of APOE-containing lipoproteins by cells. A main function of APOE is to mediate lipoprotein clearance through the uptake of chylomicrons, VLDLs, and HDLs by hepatocytes. APOE is also involved in the biosynthesis by the liver of VLDLs as well as their uptake by peripheral tissues ensuring the delivery of triglycerides and energy storage in muscle, heart and adipose tissues. By participating in the lipoprotein-mediated distribution of lipids among tissues, APOE plays a critical role in plasma and tissues lipid homeostasis. APOE is also involved in two steps of reverse cholesterol transport, the HDLs-mediated transport of cholesterol from peripheral tissues to the liver, and thereby plays an important role in cholesterol homeostasis. First, it is functionally associated with ABCA1 in the biogenesis of HDLs in tissues. Second, it is enriched in circulating HDLs and mediates their uptake by hepatocytes. APOE also plays an important role in lipid transport in the central nervous system, regulating neuron survival and sprouting. In Aotus nancymaae (Ma's night monkey), this protein is Apolipoprotein E (APOE).